Consider the following 905-residue polypeptide: Tight junction protein ZO-3 (905 aa).

The PDZ 1 domain maps to 11–93; the sequence is TATLYKDPRR…TANVTVKRPR (83 aa). Residues 92-167 form a disordered region; the sequence is PRRVQLPATK…GGGSEANGLD (76 aa). 2 positions are modified to phosphoserine: Ser-111 and Ser-128. The span at 124–133 shows a compositional bias: low complexity; sequence GDSSSGSGRS. Basic residues predominate over residues 139-155; the sequence is RRSRAGRRGRVGSHGRR. Phosphoserine is present on residues Ser-156, Ser-157, Ser-161, Ser-195, and Ser-311. Residues 187–264 form the PDZ 2 domain; sequence SVLVKRRNSE…ELTLLVLRDS (78 aa). A disordered region spans residues 289-367; sequence LTSELSQAPP…QSLEDRGYSP (79 aa). A Phosphothreonine modification is found at Thr-317. Phosphoserine occurs at positions 319, 343, and 359. Positions 368-434 constitute a PDZ 3 domain; that stretch reads DTRVVSFPKG…LTREEAVQFL (67 aa). Residues 464–541 form the SH3 domain; sequence GDSFYIRTHF…PNQSRAEQLA (78 aa). Positions 573 to 754 constitute a Guanylate kinase-like domain; sequence RRGTKKASTQ…WYQEVKAVIQ (182 aa). Position 584 is a phosphoserine (Ser-584). Disordered stretches follow at residues 773–818 and 850–905; these read EDLD…PQDV and TDKW…ATDL. Positions 851–877 are enriched in basic and acidic residues; the sequence is DKWETQADSHYTQDQRRQDSMRTYKHE. Residues Ser-891 and Ser-892 each carry the phosphoserine modification.

This sequence belongs to the MAGUK family. In terms of assembly, interacts with occludin OCLN, claudins and TPJ1. Interacts with PATJ. Interacts with UBN1. Interacts with FASLG. Interacts with CCND1. Phosphorylated. In terms of tissue distribution, is concentrated in various types of epithelium, in tissues such as the lung, liver and kidney, but not in endothelium or at cadherin-based cell-cell adhesion sites.

The protein localises to the cell membrane. Its subcellular location is the cell junction. It localises to the tight junction. It is found in the nucleus. In terms of biological role, tjp1, Tjp2, and Tjp3 are closely related scaffolding proteins that link tight junction (TJ) transmembrane proteins such as claudins, junctional adhesion molecules, and occludin to the actin cytoskeleton. The tight junction acts to limit movement of substances through the paracellular space and as a boundary between the compositionally distinct apical and basolateral plasma membrane domains of epithelial and endothelial cells. Binds and recruits PatJ to tight junctions where it connects and stabilizes apical and lateral components of tight junctions. Promotes cell-cycle progression through the sequestration of cyclin D1 (Ccnd1) at tight junctions during mitosis which prevents Ccnd1 degradation during M-phase and enables S-phase transition. With Tjp1 and Tjp2, participates in the junctional retention and stability of the transcription factor DbpA, but is not involved in its shuttling to the nucleus. Contrary to Tjp2, Tjp3 is dispensable for individual viability, embryonic development, epithelial differentiation, and the establishment of TJs, at least in the laboratory environment. This chain is Tight junction protein ZO-3 (Tjp3), found in Mus musculus (Mouse).